The following is a 142-amino-acid chain: Interleukin-3 (142 aa).

The signal sequence occupies residues 1–18 (MSHLPILLLLLLVSPGLQ). The N-linked (GlcNAc...) asparagine glycan is linked to Asn-33. Cys-34 and Cys-102 are oxidised to a cystine.

The protein belongs to the IL-3 family. In terms of assembly, monomer. Activated T-cells, mast cells, natural killer cells.

It is found in the secreted. Functionally, granulocyte/macrophage colony-stimulating factors are cytokines that act in hematopoiesis by controlling the production, differentiation, and function of 2 related white cell populations of the blood, the granulocytes and the monocytes-macrophages. In terms of biological role, this CSF induces granulocytes, macrophages, mast cells, stem cells, erythroid cells, eosinophils and megakaryocytes. The polypeptide is Interleukin-3 (IL3) (Callithrix jacchus (White-tufted-ear marmoset)).